The chain runs to 410 residues: CinA-like protein (410 aa).

This sequence belongs to the CinA family.

The sequence is that of CinA-like protein from Anaeromyxobacter sp. (strain Fw109-5).